A 399-amino-acid chain; its full sequence is Maltose excess protein 1-like, chloroplastic (399 aa).

The transit peptide at 1-67 (MSSSVSSVRL…RRRRYALPPV (67 aa)) directs the protein to the chloroplast. Transmembrane regions (helical) follow at residues 93 to 113 (FAGA…ILNA), 123 to 143 (ALFA…LSLL), 154 to 174 (AVIV…QLAM), 180 to 202 (LPQF…LNYF), 217 to 237 (ITIG…VPFI), 238 to 258 (PNSL…VVMA), 268 to 288 (INFV…WMPV), 306 to 326 (AFTM…AVFI), and 361 to 381 (FLAT…RDTI).

The protein localises to the plastid. It localises to the chloroplast inner membrane. Functionally, probable maltose transporter. Essential for the conversion of starch to sucrose in leaves at night, probably via the export of maltose from the chloroplast. In Oryza sativa subsp. japonica (Rice), this protein is Maltose excess protein 1-like, chloroplastic.